We begin with the raw amino-acid sequence, 198 residues long: Integrator complex subunit 8-like protein (198 aa).

It belongs to the Integrator subunit 8 family. In terms of assembly, component of the Integrator complex. The core complex associates with protein phosphatase 2A subunits, to form the Integrator-PP2A (INTAC) complex.

It localises to the nucleus. The protein resides in the chromosome. Functionally, component of the integrator complex, a multiprotein complex that terminates RNA polymerase II (Pol II) transcription in the promoter-proximal region of genes. The integrator complex provides a quality checkpoint during transcription elongation by driving premature transcription termination of transcripts that are unfavorably configured for transcriptional elongation: the complex terminates transcription by (1) catalyzing dephosphorylation of the C-terminal domain (CTD) of Pol II subunit polr2a, (2) degrading the exiting nascent RNA transcript via endonuclease activity and (3) promoting the release of Pol II from bound DNA. The integrator complex is also involved in terminating the synthesis of non-coding Pol II transcripts, such as enhancer RNAs (eRNAs), small nuclear RNAs (snRNAs), telomerase RNAs and long non-coding RNAs (lncRNAs). Within the integrator complex, INTS8 is required for the recruitment of protein phosphatase 2A (PP2A) to transcription pause-release checkpoint. The polypeptide is Integrator complex subunit 8-like protein (Dictyostelium discoideum (Social amoeba)).